We begin with the raw amino-acid sequence, 417 residues long: Equilibrative nucleotide transporter 2 (417 aa).

A run of 11 helical transmembrane segments spans residues 20 to 40, 52 to 72, 85 to 105, 109 to 129, 144 to 164, 185 to 205, 265 to 285, 292 to 312, 328 to 348, 354 to 374, and 393 to 413; these read AVCWLLGVGCLLAWNSMLTIV, PSRILTIIYQSFSIGALSVLV, LFGYSLFSLGSLAVLVLNLAT, GGIGSFIGVCVISAAFGLADA, PEFLQSFLAGLAASGALTSGL, LFFAMSASFELVCVLLYAYVF, LAVTLFLVYLLTFSIFPGFLS, SLGDWYALVLIAVFNVSDLVG, CLLITSLGRLLLIPAFNITGI, WMIFLMSVLGLSNGYLTVCVI, and LVLYICGGMFAGVACDWLWLV.

The protein belongs to the SLC29A/ENT transporter (TC 2.A.57) family. In terms of tissue distribution, expressed in leaves and flowers.

The protein resides in the cell membrane. May be involved in nucleoside transport. The sequence is that of Equilibrative nucleotide transporter 2 (ENT2) from Arabidopsis thaliana (Mouse-ear cress).